Here is a 189-residue protein sequence, read N- to C-terminus: Protein C1orf43 homolog (189 aa).

A helical membrane pass occupies residues 11–31 (VNVVLVMAYGSLVFVLLFIFV).

The protein resides in the membrane. It localises to the golgi apparatus. Its subcellular location is the mitochondrion. In terms of biological role, general regulator of phagocytosis. Required to uptake Gram negative bacterium by macrophages. This chain is Protein C1orf43 homolog, found in Pongo abelii (Sumatran orangutan).